The chain runs to 213 residues: uncharacterized protein (213 aa).

Basic and acidic residues predominate over residues 1-11 (MFATKDPEFEN). Disordered regions lie at residues 1 to 21 (MFAT…SPRN) and 63 to 98 (LRNK…EQAW). Polar residues predominate over residues 12–21 (RINTNKSPRN). Over residues 63 to 93 (LRNKAPKNEETKHEEHTPDNHEETDHHEAKQ) the composition is skewed to basic and acidic residues.

This is an uncharacterized protein from Escherichia coli (strain K12).